The chain runs to 1212 residues: DNA-directed RNA polymerase subunit beta' (1212 aa).

4 residues coordinate Zn(2+): Cys-60, Cys-62, Cys-75, and Cys-78. Residues Asp-450, Asp-452, and Asp-454 each contribute to the Mg(2+) site. Zn(2+)-binding residues include Cys-819, Cys-893, Cys-900, and Cys-903.

This sequence belongs to the RNA polymerase beta' chain family. As to quaternary structure, the RNAP catalytic core consists of 2 alpha, 1 beta, 1 beta' and 1 omega subunit. When a sigma factor is associated with the core the holoenzyme is formed, which can initiate transcription. Requires Mg(2+) as cofactor. Zn(2+) serves as cofactor.

The enzyme catalyses RNA(n) + a ribonucleoside 5'-triphosphate = RNA(n+1) + diphosphate. In terms of biological role, DNA-dependent RNA polymerase catalyzes the transcription of DNA into RNA using the four ribonucleoside triphosphates as substrates. In Streptococcus uberis (strain ATCC BAA-854 / 0140J), this protein is DNA-directed RNA polymerase subunit beta'.